A 169-amino-acid polypeptide reads, in one-letter code: Ureidoglycolate lyase (169 aa).

Belongs to the ureidoglycolate lyase family. As to quaternary structure, homodimer. Requires Ni(2+) as cofactor.

The enzyme catalyses (S)-ureidoglycolate = urea + glyoxylate. Its pathway is nitrogen metabolism; (S)-allantoin degradation. Its function is as follows. Catalyzes the catabolism of the allantoin degradation intermediate (S)-ureidoglycolate, generating urea and glyoxylate. Involved in the utilization of allantoin as nitrogen source. The protein is Ureidoglycolate lyase of Pseudomonas aeruginosa (strain LESB58).